A 332-amino-acid chain; its full sequence is 5-dehydro-2-deoxygluconokinase (332 aa).

The protein belongs to the carbohydrate kinase PfkB family.

The enzyme catalyses 5-dehydro-2-deoxy-D-gluconate + ATP = 6-phospho-5-dehydro-2-deoxy-D-gluconate + ADP + H(+). It participates in polyol metabolism; myo-inositol degradation into acetyl-CoA; acetyl-CoA from myo-inositol: step 5/7. Functionally, catalyzes the phosphorylation of 5-dehydro-2-deoxy-D-gluconate (2-deoxy-5-keto-D-gluconate or DKG) to 6-phospho-5-dehydro-2-deoxy-D-gluconate (DKGP). This is 5-dehydro-2-deoxygluconokinase from Bacillus thuringiensis (strain Al Hakam).